A 111-amino-acid polypeptide reads, in one-letter code: FK506-binding protein 1 (111 aa).

The interval 1 to 20 (MGVEKTIITQGSGPSPQVGQ) is disordered. A compositionally biased stretch (polar residues) spans 7–20 (IITQGSGPSPQVGQ). The region spanning 19-111 (GQKVTMEYTG…IFDVELKKIG (93 aa)) is the PPIase FKBP-type domain.

It belongs to the FKBP-type PPIase family. FKBP1 subfamily.

The protein localises to the cytoplasm. It carries out the reaction [protein]-peptidylproline (omega=180) = [protein]-peptidylproline (omega=0). Its activity is regulated as follows. Inhibited by both FK506 and rapamycin. Functionally, PPIases accelerate the folding of proteins. It catalyzes the cis-trans isomerization of proline imidic peptide bonds in oligopeptides. In Gibberella zeae (strain ATCC MYA-4620 / CBS 123657 / FGSC 9075 / NRRL 31084 / PH-1) (Wheat head blight fungus), this protein is FK506-binding protein 1 (FPR1).